The sequence spans 265 residues: Esterase claE (265 aa).

Residues Ser121, Asp211, and His239 each act as charge relay system in the active site.

It belongs to the LovG family.

It functions in the pathway secondary metabolite biosynthesis. Functionally, esterase; part of the cla gene cluster that produces clavatol and ortho-quinone methide. The clavatol biosynthesis cluster cla and the terrestric acid cluster tra are both involved in the production of peniphenones and penilactones. The non-reducing PKS claF is responsible for the formation of clavatol from successive condensations of 3 malonyl-CoA units, presumably with a simple acetyl-CoA starter unit, and 2 methylation steps. The esterase claE probably collaborates with claF by catalyzing the hydrolysis of ACP-bound acyl intermediates to free the ACP from stalled intermediates. The clavatol oxidase claD then converts clavatol to hydroxyclavatol. Spontaneous dehydration of hydroxyclavatol leads to the accumulation of the highly active ortho-quinone methide. On the other hand, the PKS-NRPS hybrid traA is involved in the formation of crustosic acid, with the help of traB and traD. The polyketide synthase module (PKS) of traA is responsible for the synthesis of the polyketide backbone via the condensation of an acetyl-CoA starter unit with 3 malonyl-CoA units. The downstream nonribosomal peptide synthetase (NRPS) module then amidates the carboxyl end of the polyketide with L-malic acid. Because traA lacks a designated enoylreductase (ER) domain, the required activity is provided the enoyl reductase traG. Crustosic acid undergoes decarboxylation and isomerization to the terrestric acid, catalyzed by the 2-oxoglutarate-dependent dioxygenase traH. Both acids are further converted to the 2 gamma-butyrolactones (R)-5-methyltetronic acid and (S)-5-carboxylmethyltetronic acid, with involvement of the cytochrome P450 monooxygenase claJ. Spontaneous addition of the methide to these gamma-butyrolactones leads to peniphenone D and penilactone D, which undergo again stereospecific attacking by methide to give penilactones A and B. In Penicillium crustosum (Blue mold fungus), this protein is Esterase claE.